The sequence spans 107 residues: Iron-binding protein IscA (107 aa).

Residues Cys-35, Cys-99, and Cys-101 each contribute to the Fe cation site.

This sequence belongs to the HesB/IscA family. Homodimer; may form tetramers and higher multimers. Requires Fe cation as cofactor.

Is able to transfer iron-sulfur clusters to apo-ferredoxin. Multiple cycles of [2Fe2S] cluster formation and transfer are observed, suggesting that IscA acts catalytically. Recruits intracellular free iron so as to provide iron for the assembly of transient iron-sulfur cluster in IscU in the presence of IscS, L-cysteine and the thioredoxin reductase system TrxA/TrxB. The chain is Iron-binding protein IscA from Yersinia pestis bv. Antiqua (strain Angola).